A 140-amino-acid polypeptide reads, in one-letter code: GTP-dependent dephospho-CoA kinase (140 aa).

GTP-binding residues include Asp-21, Val-22, Val-23, Asp-40, Lys-42, and Glu-92.

It belongs to the GTP-dependent DPCK family.

The catalysed reaction is 3'-dephospho-CoA + GTP = GDP + CoA + H(+). It functions in the pathway cofactor biosynthesis; coenzyme A biosynthesis. In terms of biological role, catalyzes the GTP-dependent phosphorylation of the 3'-hydroxyl group of dephosphocoenzyme A to form coenzyme A (CoA). This chain is GTP-dependent dephospho-CoA kinase, found in Pyrobaculum aerophilum (strain ATCC 51768 / DSM 7523 / JCM 9630 / CIP 104966 / NBRC 100827 / IM2).